We begin with the raw amino-acid sequence, 44 residues long: pyr operon leader peptide (44 aa).

The polypeptide is pyr operon leader peptide (pyrL) (Shigella flexneri).